Consider the following 304-residue polypeptide: UPF0282 protein TSIB_1029 (304 aa).

Belongs to the UPF0282 family.

The sequence is that of UPF0282 protein TSIB_1029 from Thermococcus sibiricus (strain DSM 12597 / MM 739).